We begin with the raw amino-acid sequence, 438 residues long: Putative phospholipase A2 (438 aa).

Residue serine 257 is the Nucleophile of the active site. Catalysis depends on charge relay system residues aspartate 291 and histidine 368.

Belongs to the serine esterase family.

It is found in the cytoplasm. Its subcellular location is the nucleus. The catalysed reaction is a 1-O-alkyl-2-acetyl-sn-glycero-3-phosphocholine + H2O = a 1-O-alkyl-sn-glycero-3-phosphocholine + acetate + H(+). The protein is Putative phospholipase A2 of Schizosaccharomyces pombe (strain 972 / ATCC 24843) (Fission yeast).